Here is a 450-residue protein sequence, read N- to C-terminus: Tubulin beta-3 chain (450 aa).

The short motif at 1–4 (MREI) is the MREI motif element. The GTP site is built by Q11, E69, S138, G142, T143, and G144. A Mg(2+)-binding site is contributed by E69. Position 172 is a phosphoserine; by CDK1 (S172). GTP is bound by residues N204 and N226. The tract at residues 422–450 (YQQYQDATAEEEGEMYEDDDEESEAQGPK) is disordered. The span at 429-450 (TAEEEGEMYEDDDEESEAQGPK) shows a compositional bias: acidic residues. Residue E438 is modified to 5-glutamyl polyglutamate. Residue S444 is modified to Phosphoserine.

It belongs to the tubulin family. Heterodimer of alpha- and beta-tubulin. A typical microtubule is a hollow water-filled tube with an outer diameter of 25 nm and an inner diameter of 15 nM. Alpha-beta heterodimers associate head-to-tail to form protofilaments running lengthwise along the microtubule wall with the beta-tubulin subunit facing the microtubule plus end conferring a structural polarity. Microtubules usually have 13 protofilaments but different protofilament numbers can be found in some organisms and specialized cells. Interacts with gamma-tubulin; the interaction allows microtubules to nucleate from the gamma-tubulin ring complex (gTuRC). Interacts with UNC5C (via cytoplasmic domain); this interaction is decreased by NTN1/Netrin-1. Interacts with NLRP5/MATER at cytoskeleton microtubules. Interacts with DPYSL5. Interacts with CFAP61. The cofactor is Mg(2+). In terms of processing, some glutamate residues at the C-terminus are polyglycylated, resulting in polyglycine chains on the gamma-carboxyl group. Glycylation is mainly limited to tubulin incorporated into axonemes (cilia and flagella) whereas glutamylation is prevalent in neuronal cells, centrioles, axonemes, and the mitotic spindle. Both modifications can coexist on the same protein on adjacent residues, and lowering polyglycylation levels increases polyglutamylation, and reciprocally. Cilia and flagella glycylation is required for their stability and maintenance. Flagella glycylation controls sperm motility. Post-translationally, some glutamate residues at the C-terminus are polyglutamylated, resulting in polyglutamate chains on the gamma-carboxyl group. Polyglutamylation plays a key role in microtubule severing by spastin (SPAST). SPAST preferentially recognizes and acts on microtubules decorated with short polyglutamate tails: severing activity by SPAST increases as the number of glutamates per tubulin rises from one to eight, but decreases beyond this glutamylation threshold. Glutamylation is also involved in cilia motility. Phosphorylated on Ser-172 by CDK1 during the cell cycle, from metaphase to telophase, but not in interphase. This phosphorylation inhibits tubulin incorporation into microtubules.

It is found in the cytoplasm. It localises to the cytoskeleton. The protein localises to the cell projection. Its subcellular location is the growth cone. The protein resides in the lamellipodium. It is found in the filopodium. Functionally, tubulin is the major constituent of microtubules, protein filaments consisting of alpha- and beta-tubulin heterodimers. Microtubules grow by the addition of GTP-tubulin dimers to the microtubule end, where a stabilizing cap forms. Below the cap, alpha-beta tubulin heterodimers are in GDP-bound state, owing to GTPase activity of alpha-tubulin. TUBB3 plays a critical role in proper axon guidance and maintenance. Binding of NTN1/Netrin-1 to its receptor UNC5C might cause dissociation of UNC5C from polymerized TUBB3 in microtubules and thereby lead to increased microtubule dynamics and axon repulsion. Plays a role in dorsal root ganglion axon projection towards the spinal cord. The sequence is that of Tubulin beta-3 chain (Tubb3) from Rattus norvegicus (Rat).